A 226-amino-acid chain; its full sequence is Cytochrome c-553I (226 aa).

The N-terminal stretch at 1–22 is a signal peptide; sequence MTSKTTASLLAICVACAASAIA. The tract at residues 43–68 is disordered; it reads AAVSGDAHEQPAAEAPAEEEEETPAV. Heme contacts are provided by C125, C128, H129, and M173. The tract at residues 203–226 is disordered; it reads RGRPAKREDKSDEFVAQEDSCMSG.

In terms of processing, binds 1 heme group per subunit.

It is found in the periplasm. The protein is Cytochrome c-553I (cycB) of Paracoccus denitrificans.